A 69-amino-acid chain; its full sequence is Conotoxin Eb6.14 (69 aa).

A signal peptide spans 1-17; it reads VLIIAVLFLTACQLTTA. A propeptide spanning residues 18–41 is cleaved from the precursor; it reads ETYSRGRQKHRARRSTDKNSKWTR. 3 cysteine pairs are disulfide-bonded: Cys43–Cys57, Cys50–Cys61, and Cys56–Cys68.

Belongs to the conotoxin O1 superfamily. Expressed by the venom duct.

It is found in the secreted. The sequence is that of Conotoxin Eb6.14 (E1) from Conus ebraeus (Hebrew cone).